Reading from the N-terminus, the 2368-residue chain is Voltage-dependent P/Q-type calcium channel subunit alpha-1A (2368 aa).

The Cytoplasmic portion of the chain corresponds to 1–100 (MARFGDEMPG…KYAKKITEWP (100 aa)). An I repeat occupies 65 to 365 (NPIPVRQNCL…LVLGVLSGEF (301 aa)). Residues 101-119 (PFEYMILATIIANCIVLAL) form a helical membrane-spanning segment. Over 120 to 138 (EQHLPDDDKTPMSERLDDT) the chain is Extracellular. Residues 139 to 156 (EPYFIGIFCFEAGIKIVA) form a helical membrane-spanning segment. The Cytoplasmic segment spans residues 157 to 168 (LGFAFHKGSYLR). The helical transmembrane segment at 169–184 (NGWNVMDFVVVLTGIL) threads the bilayer. The Extracellular portion of the chain corresponds to 185 to 192 (ATVGTEFD). Residues 193-211 (LRTLRAVRVLRPLKLVSGI) traverse the membrane as a helical segment. Over 212 to 230 (PSLQVVLKSIMKAMIPLLQ) the chain is Cytoplasmic. Residues 231–250 (IGLLLFFAILIFAIIGLEFY) form a helical membrane-spanning segment. Over 251–337 (MGKFHTTCFE…NSNDASGNTW (87 aa)) the chain is Extracellular. N-linked (GlcNAc...) asparagine glycosylation occurs at asparagine 285. Position 320 (glutamate 320) interacts with Ca(2+). A helical transmembrane segment spans residues 338–362 (NWLYFIPLIIIGSFFMLNLVLGVLS). Topologically, residues 363 to 489 (GEFAKERERV…FYIRRMVKTQ (127 aa)) are cytoplasmic. A binding to the beta subunit region spans residues 385–402 (QQIERELNGYMEWISKAE). A Phosphothreonine modification is found at threonine 411. Phosphoserine is present on residues serine 450 and serine 453. One copy of the II repeat lies at 475–719 (ERRMRFYIRR…VFLAIAVDNL (245 aa)). Residues 490 to 509 (AFYWTVLSLVALNTLCVAIV) form a helical membrane-spanning segment. Residues 510–523 (HYNQPEWLSDFLYY) lie on the Extracellular side of the membrane. The helical transmembrane segment at 524-543 (AEFIFLGLFMSEMFIKMYGL) threads the bilayer. The Cytoplasmic portion of the chain corresponds to 544 to 551 (GTRPYFHS). The helical transmembrane segment at 552 to 570 (SFNCFDCGVIIGSIFEVIW) threads the bilayer. The Extracellular portion of the chain corresponds to 571–580 (AVIKPGTSFG). Residues 581-599 (ISVLRALRLLRIFKVTKYW) form a helical membrane-spanning segment. The Cytoplasmic portion of the chain corresponds to 600–618 (ASLRNLVVSLLNSMKSIIS). The chain crosses the membrane as a helical span at residues 619–638 (LLFLLFLFIVVFALLGMQLF). Residues 639 to 691 (GGQFNFDEGTPPTNFDTFPAAIMTVFQILTGEDWNEVMYDGIKSQGGVQGGMV) lie on the Extracellular side of the membrane. Glutamate 670 is a binding site for Ca(2+). Residues 692–716 (FSIYFIVLTLFGNYTLLNVFLAIAV) traverse the membrane as a helical segment. At 717 to 1190 (DNLANAQELT…TNPLRRLCHY (474 aa)) the chain is on the cytoplasmic side. 2 positions are modified to phosphoserine: serine 752 and serine 755. Positions 762–781 (AVKEQQKNQKPTKSVWEQRT) are disordered. The segment covering 769-779 (NQKPTKSVWEQ) has biased composition (polar residues). Serine 792 carries the phosphoserine modification. 2 disordered regions span residues 823–1117 (PLVV…RKPE) and 1137–1170 (VNKNANPDPLPKKEEEKKEEEEADPGEDGPKPMP). Composition is skewed to basic and acidic residues over residues 850 to 862 (RPRESARDPDARR), 871 to 924 (APGR…EGEP), and 932 to 958 (RPGDEPDDRPERRPRPRDATRPARAAD). A phosphoserine mark is found at serine 1038, serine 1042, and serine 1051. Residues 1056–1073 (GNSTNPGPALATNPQNAA) are compositionally biased toward polar residues. Over residues 1074-1083 (SRRTPNNPGN) the composition is skewed to low complexity. The span at 1094–1111 (ENSLIVTNPSSTQPNSAK) shows a compositional bias: polar residues. The span at 1153 to 1163 (KKEEEEADPGE) shows a compositional bias: acidic residues. Residues 1182–1465 (NPLRRLCHYI…IFVALIIITF (284 aa)) form an III repeat. The helical transmembrane segment at 1191-1214 (ILNLRYFEMCILMVIAMSSIALAA) threads the bilayer. Topologically, residues 1215–1231 (EDPVQPNAPRNNVLRYF) are extracellular. Residues 1232–1251 (DYVFTGVFTFEMVIKMIDLG) form a helical membrane-spanning segment. Residues 1252–1258 (LVLHQGA) lie on the Cytoplasmic side of the membrane. Residues 1259-1282 (YFRDLWNILDFIVVSGALVAFAFT) traverse the membrane as a helical segment. At 1283 to 1293 (GNSKGKDINTI) the chain is on the extracellular side. The helical transmembrane segment at 1294-1311 (KSLRVLRVLRPLKTIKRL) threads the bilayer. At 1312 to 1330 (PKLKAVFDCVVNSLKNVFN) the chain is on the cytoplasmic side. The helical transmembrane segment at 1331 to 1350 (ILIVYMLFMFIFAVVAVQLF) threads the bilayer. Over 1351–1437 (KGKFFHCTDE…QGPSPGYRME (87 aa)) the chain is Extracellular. Glutamate 1411 contributes to the Ca(2+) binding site. Residues 1438 to 1462 (MSIFYVVYFVVFPFFFVNIFVALII) form a helical membrane-spanning segment. At 1463–1518 (ITFQEQGDKMMEEYSLEKNERACIDFAISAKPLTRHMPQNKQSFQYRMWQFVVSPP) the chain is on the cytoplasmic side. An IV repeat occupies 1502-1765 (NKQSFQYRMW…LFVAVIMDNF (264 aa)). A helical transmembrane segment spans residues 1519 to 1537 (FEYTIMAMIALNTIVLMMK). Over 1538 to 1551 (FYGASVAYENALRV) the chain is Extracellular. The helical transmembrane segment at 1552–1573 (FNIVFTSLFSLECVLKVMAFGI) threads the bilayer. The Cytoplasmic portion of the chain corresponds to 1574–1580 (LNYFRDA). The helical transmembrane segment at 1581–1600 (WNIFDFVTVLGSITDILVTE) threads the bilayer. Residues 1601 to 1607 (FGNNFIN) are Extracellular-facing. N-linked (GlcNAc...) asparagine glycosylation occurs at asparagine 1607. The chain crosses the membrane as a helical span at residues 1608–1626 (LSFLRLFRAARLIKLLRQG). Residues 1627 to 1645 (YTIRILLWTFVQSFKALPY) lie on the Cytoplasmic side of the membrane. The helical transmembrane segment at 1646-1665 (VCLLIAMLFFIYAIIGMQVF) threads the bilayer. Over 1666–1737 (GNIGIDGEDE…ILTADCGNEF (72 aa)) the chain is Extracellular. A helical membrane pass occupies residues 1738–1763 (AYFYFVSFIFLCSFLMLNLFVAVIMD). Residues 1764–2368 (NFEYLTRDSS…AYSESEDDWC (605 aa)) lie on the Cytoplasmic side of the membrane. Residue threonine 1935 is modified to Phosphothreonine. Residues 1940-2368 (QRMEPPSPTQ…AYSESEDDWC (429 aa)) form a disordered region. 2 stretches are compositionally biased toward polar residues: residues 1948–1963 (TQEGGPSQNALPSTQL) and 1981–1997 (SWVTQRAQEMFQKTGTW). Phosphoserine is present on residues serine 1998, serine 2016, serine 2028, serine 2030, serine 2071, and serine 2091. The span at 2008–2017 (PNSQPNSQSV) shows a compositional bias: polar residues. A compositionally biased stretch (basic and acidic residues) spans 2018 to 2034 (EMREMGTDGYSDSEHYL). A compositionally biased stretch (polar residues) spans 2063 to 2073 (DLSTISDTSPM). Composition is skewed to basic and acidic residues over residues 2085–2102 (RRLDDYSLERVPPEENQR) and 2143–2153 (PSKDRDQDRGR). Positions 2154 to 2172 (PKDRKHRPHHHHHHHHHHP) are enriched in basic residues. Residues 2173–2209 (PAPDRDRYAQERPDTGRARAREQRWSRSPSEGREHTT) show a composition bias toward basic and acidic residues. Residues 2213–2231 (GSSSVSGSPAPSTSGTSTP) show a composition bias toward low complexity. The segment covering 2289–2305 (EGPRPRGADYTEPDSPR) has biased composition (basic and acidic residues).

The protein belongs to the calcium channel alpha-1 subunit (TC 1.A.1.11) family. CACNA1A subfamily. Voltage-dependent calcium channels are multisubunit complexes, consisting of alpha-1, alpha-2, beta and delta subunits in a 1:1:1:1 ratio. The channel activity is directed by the pore-forming and voltage-sensitive alpha-1 subunit. In many cases, this subunit is sufficient to generate voltage-sensitive calcium channel activity. The auxiliary subunits beta and alpha-2/delta linked by a disulfide bridge regulate the channel activity. Interacts with CABP1. Interacts with the spider omega-agatoxin-IVA (AC P30288). Interacts with TSPOAP1. Brain specific; mainly found in the cerebellum, olfactory bulb, cerebral cortex, hippocampus, and inferior colliculus. In the hippocampus, expression occurs in pyramidal and granule neurons, as well as in interneurons. Purkinje cells contain predominantly P-type VSCC, the Q-type being a prominent calcium current in cerebellar granule cells.

The protein resides in the cell membrane. It catalyses the reaction Ca(2+)(in) = Ca(2+)(out). Voltage-sensitive calcium channels (VSCC) mediate the entry of calcium ions into excitable cells and are also involved in a variety of calcium-dependent processes, including muscle contraction, hormone or neurotransmitter release, gene expression, cell motility, cell division and cell death. The isoform alpha-1A gives rise to P and/or Q-type calcium currents. P/Q-type calcium channels belong to the 'high-voltage activated' (HVA) group and are specifically blocked by the spider omega-agatoxin-IVA (AC P54282). They are however insensitive to dihydropyridines (DHP). The polypeptide is Voltage-dependent P/Q-type calcium channel subunit alpha-1A (Mus musculus (Mouse)).